Here is a 391-residue protein sequence, read N- to C-terminus: Ferrochelatase (391 aa).

H196 and E281 together coordinate Fe cation.

Belongs to the ferrochelatase family.

It localises to the cytoplasm. It carries out the reaction heme b + 2 H(+) = protoporphyrin IX + Fe(2+). The protein operates within porphyrin-containing compound metabolism; protoheme biosynthesis; protoheme from protoporphyrin-IX: step 1/1. Functionally, catalyzes the ferrous insertion into protoporphyrin IX. The polypeptide is Ferrochelatase (Prochlorococcus marinus (strain MIT 9215)).